Consider the following 423-residue polypeptide: Phosphoribosylamine--glycine ligase (423 aa).

The ATP-grasp domain occupies 107 to 314 (KAFMAKYNIP…LSDLVEAAID (208 aa)). Residue 133 to 194 (VNQKGAPIVI…EDFLQGEEAS (62 aa)) participates in ATP binding. The Mg(2+) site is built by glutamate 284 and asparagine 286.

Belongs to the GARS family. It depends on Mg(2+) as a cofactor. Mn(2+) is required as a cofactor.

The enzyme catalyses 5-phospho-beta-D-ribosylamine + glycine + ATP = N(1)-(5-phospho-beta-D-ribosyl)glycinamide + ADP + phosphate + H(+). The protein operates within purine metabolism; IMP biosynthesis via de novo pathway; N(1)-(5-phospho-D-ribosyl)glycinamide from 5-phospho-alpha-D-ribose 1-diphosphate: step 2/2. The polypeptide is Phosphoribosylamine--glycine ligase (Neisseria meningitidis serogroup A / serotype 4A (strain DSM 15465 / Z2491)).